The following is a 216-amino-acid chain: Peptide deformylase (216 aa).

Fe cation contacts are provided by C134 and H178. Residue E179 is part of the active site. H182 serves as a coordination point for Fe cation.

The protein belongs to the polypeptide deformylase family. It depends on Fe(2+) as a cofactor.

It catalyses the reaction N-terminal N-formyl-L-methionyl-[peptide] + H2O = N-terminal L-methionyl-[peptide] + formate. Its function is as follows. Removes the formyl group from the N-terminal Met of newly synthesized proteins. Requires at least a dipeptide for an efficient rate of reaction. N-terminal L-methionine is a prerequisite for activity but the enzyme has broad specificity at other positions. This is Peptide deformylase from Mycoplasma pneumoniae (strain ATCC 29342 / M129 / Subtype 1) (Mycoplasmoides pneumoniae).